Consider the following 710-residue polypeptide: Probable threonine--tRNA ligase 1, cytoplasmic (710 aa).

A disordered region spans residues 1–35 (MSDSQENKPVETPTEVKPVAEKKPAAEKKEKKPAV). Residues 18 to 33 (PVAEKKPAAEKKEKKP) are compositionally biased toward basic and acidic residues. The TGS domain maps to 72–137 (KEEPINVTLP…EADCNLQLCK (66 aa)).

The protein belongs to the class-II aminoacyl-tRNA synthetase family.

It localises to the cytoplasm. The enzyme catalyses tRNA(Thr) + L-threonine + ATP = L-threonyl-tRNA(Thr) + AMP + diphosphate + H(+). In Dictyostelium discoideum (Social amoeba), this protein is Probable threonine--tRNA ligase 1, cytoplasmic (thrS1).